Consider the following 1482-residue polypeptide: Chromosome partition protein MukB (1482 aa).

Residue 34–41 (GGNGAGKS) participates in ATP binding. Positions 333 to 665 (ASDHLNLVQT…LEKQIERLSQ (333 aa)) form a coiled coil. The segment at 666 to 783 (PSGAEDSRMI…ELPLFGRAAR (118 aa)) is flexible hinge. Coiled coils occupy residues 784–1116 (ENRL…AKAG) and 1209–1260 (VDAI…MLNQ).

Belongs to the SMC family. MukB subfamily. As to quaternary structure, homodimerization via its hinge domain. Binds to DNA via its C-terminal region. Interacts, and probably forms a ternary complex, with MukE and MukF via its C-terminal region. The complex formation is stimulated by calcium or magnesium. Interacts with tubulin-related protein FtsZ.

Its subcellular location is the cytoplasm. It is found in the nucleoid. In terms of biological role, plays a central role in chromosome condensation, segregation and cell cycle progression. Functions as a homodimer, which is essential for chromosome partition. Involved in negative DNA supercoiling in vivo, and by this means organize and compact chromosomes. May achieve or facilitate chromosome segregation by condensation DNA from both sides of a centrally located replisome during cell division. This is Chromosome partition protein MukB from Photorhabdus laumondii subsp. laumondii (strain DSM 15139 / CIP 105565 / TT01) (Photorhabdus luminescens subsp. laumondii).